The sequence spans 220 residues: Vesicle-associated membrane protein 7 (220 aa).

At Ala2 the chain carries N-acetylalanine; partial. Residues Ala2 to Lys188 lie on the Cytoplasmic side of the membrane. The Longin domain maps to Val7 to Leu110. Residues Lys125–Lys185 form the v-SNARE coiled-coil homology domain. Residues Ser167 and Ser168 each carry the phosphoserine modification. A helical; Anchor for type IV membrane protein transmembrane segment spans residues Leu189 to Cys209. Topologically, residues Gly210–Lys220 are vesicular.

This sequence belongs to the synaptobrevin family. As to quaternary structure, component of the SNARE complex composed of STX4, SNAP23 and VAMP7 that binds SYT7 during lysosomal exocytosis. Component of the SNARE complex composed of STX7, STX8, VAMP7 and VTI1B that is required for heterotypic fusion of late endosomes with lysosomes. May interact with STX17. Interacts with PICALM. Interacts with RAB21. Detected in all tissues tested.

It is found in the cytoplasmic vesicle. The protein resides in the secretory vesicle membrane. Its subcellular location is the golgi apparatus. The protein localises to the trans-Golgi network membrane. It localises to the late endosome membrane. It is found in the lysosome membrane. The protein resides in the endoplasmic reticulum membrane. Its subcellular location is the phagosome membrane. The protein localises to the synapse. It localises to the synaptosome. In terms of biological role, involved in the targeting and/or fusion of transport vesicles to their target membrane during transport of proteins from the early endosome to the lysosome. Required for heterotypic fusion of late endosomes with lysosomes and homotypic lysosomal fusion. Required for calcium regulated lysosomal exocytosis. Involved in the export of chylomicrons from the endoplasmic reticulum to the cis Golgi. Required for exocytosis of mediators during eosinophil and neutrophil degranulation, and target cell killing by natural killer cells. Required for focal exocytosis of late endocytic vesicles during phagosome formation. The sequence is that of Vesicle-associated membrane protein 7 (VAMP7) from Homo sapiens (Human).